Consider the following 337-residue polypeptide: Ketol-acid reductoisomerase (NADP(+)) (337 aa).

The KARI N-terminal Rossmann domain maps to 1–181 (MKIYYEHDAD…GAARAGVIAT (181 aa)). NADP(+)-binding positions include 24 to 27 (FGSQ), arginine 47, serine 50, serine 52, and 82 to 85 (DEKQ). The active site involves histidine 107. An NADP(+)-binding site is contributed by glycine 133. The KARI C-terminal knotted domain maps to 182-328 (TFKDETETDL…SRLRAMMPFL (147 aa)). Residues aspartate 190, glutamate 194, glutamate 226, and glutamate 230 each contribute to the Mg(2+) site. Serine 251 is a substrate binding site.

The protein belongs to the ketol-acid reductoisomerase family. Mg(2+) is required as a cofactor.

It catalyses the reaction (2R)-2,3-dihydroxy-3-methylbutanoate + NADP(+) = (2S)-2-acetolactate + NADPH + H(+). The catalysed reaction is (2R,3R)-2,3-dihydroxy-3-methylpentanoate + NADP(+) = (S)-2-ethyl-2-hydroxy-3-oxobutanoate + NADPH + H(+). Its pathway is amino-acid biosynthesis; L-isoleucine biosynthesis; L-isoleucine from 2-oxobutanoate: step 2/4. It participates in amino-acid biosynthesis; L-valine biosynthesis; L-valine from pyruvate: step 2/4. Its function is as follows. Involved in the biosynthesis of branched-chain amino acids (BCAA). Catalyzes an alkyl-migration followed by a ketol-acid reduction of (S)-2-acetolactate (S2AL) to yield (R)-2,3-dihydroxy-isovalerate. In the isomerase reaction, S2AL is rearranged via a Mg-dependent methyl migration to produce 3-hydroxy-3-methyl-2-ketobutyrate (HMKB). In the reductase reaction, this 2-ketoacid undergoes a metal-dependent reduction by NADPH to yield (R)-2,3-dihydroxy-isovalerate. The protein is Ketol-acid reductoisomerase (NADP(+)) of Thermus thermophilus (strain ATCC BAA-163 / DSM 7039 / HB27).